Consider the following 346-residue polypeptide: Methylthioribose-1-phosphate isomerase (346 aa).

Substrate is bound by residues 54–56, R91, and Q192; that span reads RGA. D233 serves as the catalytic Proton donor. Substrate is bound at residue 243–244; that stretch reads NK.

The protein belongs to the eIF-2B alpha/beta/delta subunits family. MtnA subfamily.

It catalyses the reaction 5-(methylsulfanyl)-alpha-D-ribose 1-phosphate = 5-(methylsulfanyl)-D-ribulose 1-phosphate. It participates in amino-acid biosynthesis; L-methionine biosynthesis via salvage pathway; L-methionine from S-methyl-5-thio-alpha-D-ribose 1-phosphate: step 1/6. Its function is as follows. Catalyzes the interconversion of methylthioribose-1-phosphate (MTR-1-P) into methylthioribulose-1-phosphate (MTRu-1-P). The protein is Methylthioribose-1-phosphate isomerase of Yersinia pseudotuberculosis serotype O:1b (strain IP 31758).